Here is a 323-residue protein sequence, read N- to C-terminus: Peroxisomal and mitochondrial division factor 2 (323 aa).

3 disordered regions span residues 1–55, 73–92, and 120–143; these read MAEE…NDAI, ESKAKRKMGEMEREIDKSDE, and TARTEGEEATAEAEKLRSEISQKG. Over 1–297 the chain is Cytoplasmic; that stretch reads MAEERSLNGE…WSPNVTAVGS (297 aa). A compositionally biased stretch (acidic residues) spans 13-26; it reads GQDDESFFDSDQQG. Positions 28-278 form a coiled coil; the sequence is DGKSTELNQK…INGLKNVVEE (251 aa). Residues 298-318 traverse the membrane as a helical segment; sequence GGAVAAVAVAVAGAAVVCYIY. Residues 319 to 323 are Mitochondrial intermembrane-facing; that stretch reads HSRRV.

Homodimer. Interacts with PMD1.

It is found in the mitochondrion outer membrane. In terms of biological role, involved in morphogenesis and proliferation of mitochondria. Does not act redundantly with PMD1. Is not involved in peroxisomal proliferation. The sequence is that of Peroxisomal and mitochondrial division factor 2 from Arabidopsis thaliana (Mouse-ear cress).